We begin with the raw amino-acid sequence, 246 residues long: Metallo-beta-lactamase type 2 (246 aa).

The first 20 residues, Met-1–Ala-20, serve as a signal peptide directing secretion. His-95, His-97, Asp-99, His-157, and Cys-176 together coordinate Zn(2+). Asp-99 contributes to the a beta-lactam binding site. A beta-lactam-binding residues include Lys-179 and Asn-185. A Zn(2+)-binding site is contributed by His-215.

The protein belongs to the metallo-beta-lactamase superfamily. Class-B beta-lactamase family. In terms of assembly, monomer. Requires Zn(2+) as cofactor.

The protein resides in the periplasm. It catalyses the reaction a beta-lactam + H2O = a substituted beta-amino acid. Its function is as follows. Confers resistance to the different beta-lactam antibiotics (penicillin, cephalosporin and carbapenem) via the hydrolysis of the beta-lactam ring. Exhibits higher catalytic efficiency toward ticarcillin and piperacillin than blaIMP-1. Exhibits catalytic activity for carbapenem compounds, but has a preference for imipenem and ertapenem over meropenem. Has high efficiency for the hydrolysis of cefuroxime. Exhibits hydrolysis of all cephalosporins tested. Exhibits no hydrolysis of temocillin, the 6-alpha-methoxy semisynthetic derivative of ticarcillin. The chain is Metallo-beta-lactamase type 2 from Pseudomonas aeruginosa.